Here is a 337-residue protein sequence, read N- to C-terminus: uncharacterized protein (337 aa).

29–36 (GPKSSGKS) is a binding site for ATP.

Belongs to the archaeal ATPase family.

This is an uncharacterized protein from Methanocaldococcus jannaschii (strain ATCC 43067 / DSM 2661 / JAL-1 / JCM 10045 / NBRC 100440) (Methanococcus jannaschii).